A 118-amino-acid chain; its full sequence is Acidic phospholipase A2 CM-I (118 aa).

Cystine bridges form between cysteine 11–cysteine 70, cysteine 26–cysteine 117, cysteine 28–cysteine 44, cysteine 43–cysteine 98, cysteine 50–cysteine 91, cysteine 59–cysteine 84, and cysteine 77–cysteine 89. 3 residues coordinate Ca(2+): tyrosine 27, glycine 29, and glycine 31. Histidine 47 is an active-site residue. Residue aspartate 48 participates in Ca(2+) binding. Aspartate 92 is an active-site residue.

This sequence belongs to the phospholipase A2 family. Group I subfamily. D49 sub-subfamily. It depends on Ca(2+) as a cofactor. As to expression, expressed by the venom gland.

The protein localises to the secreted. The enzyme catalyses a 1,2-diacyl-sn-glycero-3-phosphocholine + H2O = a 1-acyl-sn-glycero-3-phosphocholine + a fatty acid + H(+). Functionally, snake venom phospholipase A2 (PLA2) that causes myonecrosis when injected intramuscularly, shows indirect hemolytic activity, abolishes twitches evoked by indirect stimulation earlier than those by direct stimulation (in the mouse phrenic nerve-diaphragm preparation) but does not produce complete neuromuscular block (up to 30 ug/ml) (in the chick biventer cervicis nerve-muscle preparation). PLA2 catalyzes the calcium-dependent hydrolysis of the 2-acyl groups in 3-sn-phosphoglycerides. The sequence is that of Acidic phospholipase A2 CM-I from Naja mossambica (Mozambique spitting cobra).